We begin with the raw amino-acid sequence, 1358 residues long: DNA-directed RNA polymerase subunit beta (1358 aa).

This sequence belongs to the RNA polymerase beta chain family. In terms of assembly, the RNAP catalytic core consists of 2 alpha, 1 beta, 1 beta' and 1 omega subunit. When a sigma factor is associated with the core the holoenzyme is formed, which can initiate transcription.

It catalyses the reaction RNA(n) + a ribonucleoside 5'-triphosphate = RNA(n+1) + diphosphate. In terms of biological role, DNA-dependent RNA polymerase catalyzes the transcription of DNA into RNA using the four ribonucleoside triphosphates as substrates. The protein is DNA-directed RNA polymerase subunit beta of Chromohalobacter salexigens (strain ATCC BAA-138 / DSM 3043 / CIP 106854 / NCIMB 13768 / 1H11).